Here is a 111-residue protein sequence, read N- to C-terminus: Cytochrome c (111 aa).

Ala1 carries the N-acetylalanine modification. Heme c-binding residues include Cys22, Cys25, and His26. Residue Lys80 is modified to N6,N6,N6-trimethyllysine. Met88 provides a ligand contact to heme c. Lys94 carries the N6,N6,N6-trimethyllysine modification.

The protein belongs to the cytochrome c family. Post-translationally, binds 1 heme c group covalently per subunit.

It localises to the mitochondrion intermembrane space. Its function is as follows. Electron carrier protein. The oxidized form of the cytochrome c heme group can accept an electron from the heme group of the cytochrome c1 subunit of cytochrome reductase. Cytochrome c then transfers this electron to the cytochrome oxidase complex, the final protein carrier in the mitochondrial electron-transport chain. This chain is Cytochrome c, found in Guizotia abyssinica (Niger).